The primary structure comprises 496 residues: Glutamyl-tRNA(Gln) amidotransferase subunit A (496 aa).

Residues Lys75 and Ser150 each act as charge relay system in the active site. The active-site Acyl-ester intermediate is the Ser174.

This sequence belongs to the amidase family. GatA subfamily. As to quaternary structure, heterotrimer of A, B and C subunits.

The catalysed reaction is L-glutamyl-tRNA(Gln) + L-glutamine + ATP + H2O = L-glutaminyl-tRNA(Gln) + L-glutamate + ADP + phosphate + H(+). Allows the formation of correctly charged Gln-tRNA(Gln) through the transamidation of misacylated Glu-tRNA(Gln) in organisms which lack glutaminyl-tRNA synthetase. The reaction takes place in the presence of glutamine and ATP through an activated gamma-phospho-Glu-tRNA(Gln). The chain is Glutamyl-tRNA(Gln) amidotransferase subunit A from Burkholderia mallei (strain NCTC 10247).